The chain runs to 317 residues: Nuclear distribution protein nudE homolog (317 aa).

Residues 29 to 180 (TDVKQEYDEF…LKQELNVKSR (152 aa)) adopt a coiled-coil conformation. Residues 186–205 (NGTSVPTANDTNTVNSSMNS) form a disordered region.

Belongs to the nudE family.

It localises to the cytoplasm. The protein resides in the cytoskeleton. Its subcellular location is the microtubule organizing center. It is found in the centrosome. The protein localises to the spindle. In terms of biological role, chaperone protein with functions in nuclear localization. Required for centrosome duplication and formation and function of the mitotic spindle. In postmitotic neurons, acts with nudC downstream of dar1 to ensure correct positioning of the nuclei in primary dendrites and as a consequence, is required for determining multipolar neuron morphology. The sequence is that of Nuclear distribution protein nudE homolog from Drosophila melanogaster (Fruit fly).